Reading from the N-terminus, the 125-residue chain is Small ribosomal subunit protein eS8 (125 aa).

Residues methionine 1–arginine 30 form a disordered region.

It belongs to the eukaryotic ribosomal protein eS8 family. Part of the 30S ribosomal subunit.

This chain is Small ribosomal subunit protein eS8, found in Picrophilus torridus (strain ATCC 700027 / DSM 9790 / JCM 10055 / NBRC 100828 / KAW 2/3).